The following is a 211-amino-acid chain: Troponin I, cardiac muscle (211 aa).

The interval 1–24 (MADESSDAAGEPQPAPAPVRRRSS) is disordered. Ala-2 carries the N-acetylalanine modification. Phosphoserine is present on residues Ser-5 and Ser-6. Ser-23 and Ser-24 each carry phosphoserine; by PKA and PKD/PRKD1. At Tyr-27 the chain carries Phosphotyrosine. Thr-32 is modified (phosphothreonine; by STK4/MST1). Residues 33–80 (EPHAKKKSKISASRKLQLKTLMLQIAKQEMEREAEERRGEKGRVLRTR) are involved in binding TNC. 2 positions are modified to phosphoserine; by PKC/PRKCE: Ser-43 and Ser-45. Position 52 is a phosphothreonine; by STK4/MST1 (Thr-52). Phosphothreonine is present on Thr-79. Residues Thr-130 and Thr-144 each carry the phosphothreonine; by STK4/MST1 modification. The segment at 130–151 (TQKIYDLRGKFKRPTLRRVRIS) is involved in binding TNC and actin. Ser-151, Ser-167, and Ser-200 each carry phosphoserine.

It belongs to the troponin I family. In terms of assembly, interacts with TRIM63. Binds to actin and tropomyosin. Interacts with STK4/MST1. Phosphorylated at Ser-23 and Ser-24 by PRKD1; phosphorylation reduces myofilament calcium sensitivity. Phosphorylated preferentially at Thr-32. Phosphorylation by STK4/MST1 alters its binding affinity to TNNC1 (cardiac Tn-C) and TNNT2 (cardiac Tn-T). Phosphorylated at Ser-43 and Ser-45 by PRKCE; phosphorylation increases myocardium contractile dysfunction.

Functionally, troponin I is the inhibitory subunit of troponin, the thin filament regulatory complex which confers calcium-sensitivity to striated muscle actomyosin ATPase activity. The sequence is that of Troponin I, cardiac muscle (Tnni3) from Mus musculus (Mouse).